The sequence spans 254 residues: Pyrroloquinoline-quinone synthase (254 aa).

Belongs to the PqqC family.

The catalysed reaction is 6-(2-amino-2-carboxyethyl)-7,8-dioxo-1,2,3,4,7,8-hexahydroquinoline-2,4-dicarboxylate + 3 O2 = pyrroloquinoline quinone + 2 H2O2 + 2 H2O + H(+). It functions in the pathway cofactor biosynthesis; pyrroloquinoline quinone biosynthesis. In terms of biological role, ring cyclization and eight-electron oxidation of 3a-(2-amino-2-carboxyethyl)-4,5-dioxo-4,5,6,7,8,9-hexahydroquinoline-7,9-dicarboxylic-acid to PQQ. The sequence is that of Pyrroloquinoline-quinone synthase from Rhodopseudomonas palustris (strain ATCC BAA-98 / CGA009).